A 507-amino-acid polypeptide reads, in one-letter code: Maturase K (507 aa).

Belongs to the intron maturase 2 family. MatK subfamily.

The protein resides in the plastid. It localises to the chloroplast. Functionally, usually encoded in the trnK tRNA gene intron. Probably assists in splicing its own and other chloroplast group II introns. In Lens culinaris (Lentil), this protein is Maturase K.